The following is a 1235-amino-acid chain: ATP-dependent helicase/nuclease subunit A (1235 aa).

The 471-residue stretch at 12 to 482 (SLWTDDQWKA…IDLSQNFRSR (471 aa)) folds into the UvrD-like helicase ATP-binding domain. An ATP-binding site is contributed by 33–40 (AAAGSGKT). The UvrD-like helicase C-terminal domain maps to 509-800 (AAELTLGAKS…RMMTIHASKG (292 aa)).

Belongs to the helicase family. AddA subfamily. As to quaternary structure, heterodimer of AddA and AddB/RexB. Requires Mg(2+) as cofactor.

It carries out the reaction Couples ATP hydrolysis with the unwinding of duplex DNA by translocating in the 3'-5' direction.. The enzyme catalyses ATP + H2O = ADP + phosphate + H(+). The heterodimer acts as both an ATP-dependent DNA helicase and an ATP-dependent, dual-direction single-stranded exonuclease. Recognizes the chi site generating a DNA molecule suitable for the initiation of homologous recombination. The AddA nuclease domain is required for chi fragment generation; this subunit has the helicase and 3' -&gt; 5' nuclease activities. In Listeria monocytogenes serotype 4a (strain HCC23), this protein is ATP-dependent helicase/nuclease subunit A.